The primary structure comprises 501 residues: Protein YLS7 (501 aa).

The helical; Signal-anchor for type II membrane protein transmembrane segment at 25-45 (IAFAIGGLTSFVIFASLLLFT) threads the bilayer. A disordered region spans residues 69-131 (HSIHDPDRNP…NVSIDEEATQ (63 aa)). A compositionally biased stretch (low complexity) spans 78-89 (PSPVSSSESPPV). The segment covering 94–113 (SDDKVLPKGSHDSNDVRLGE) has biased composition (basic and acidic residues). Polar residues predominate over residues 114–124 (ETNSGKSSNVS). Positions 211-213 (GDS) match the GDS motif motif. Positions 438 to 467 (RHDGHPGPYRSPDPKKITKRGPDGQPPPQD) are disordered. Residues 449–459 (PDPKKITKRGP) show a composition bias toward basic and acidic residues. The short motif at 467 to 481 (DCLHWCMPGPVDTWN) is the DCXHWCLPGXXDXWN motif element.

Belongs to the PC-esterase family. TBL subfamily. As to expression, expressed in roots, cauline leaves and flowers.

The protein localises to the membrane. In terms of biological role, may act as a bridging protein that binds pectin and other cell wall polysaccharides. Probably involved in maintaining esterification of pectins. May be involved in the specific O-acetylation of cell wall polymers. This chain is Protein YLS7 (YLS7), found in Arabidopsis thaliana (Mouse-ear cress).